The primary structure comprises 150 residues: Urease accessory protein UreE (150 aa).

Belongs to the UreE family.

It localises to the cytoplasm. Functionally, involved in urease metallocenter assembly. Binds nickel. Probably functions as a nickel donor during metallocenter assembly. The chain is Urease accessory protein UreE from Streptococcus vestibularis.